A 245-amino-acid chain; its full sequence is tRNA (guanine-N(7)-)-methyltransferase (245 aa).

Residues Gly70, 93–94, 126–127, and Leu146 contribute to the S-adenosyl-L-methionine site; these read EI and NA. Residue Asp149 is part of the active site. 224 to 226 serves as a coordination point for S-adenosyl-L-methionine; sequence SEE.

The protein belongs to the class I-like SAM-binding methyltransferase superfamily. TrmB family.

It localises to the nucleus. The enzyme catalyses guanosine(46) in tRNA + S-adenosyl-L-methionine = N(7)-methylguanosine(46) in tRNA + S-adenosyl-L-homocysteine. It functions in the pathway tRNA modification; N(7)-methylguanine-tRNA biosynthesis. Catalyzes the formation of N(7)-methylguanine at position 46 (m7G46) in tRNA. The protein is tRNA (guanine-N(7)-)-methyltransferase of Aedes aegypti (Yellowfever mosquito).